A 217-amino-acid chain; its full sequence is Peptide deformylase (217 aa).

2 residues coordinate Fe cation: Cys91 and His133. The active site involves Glu134. Residue His137 participates in Fe cation binding. The segment at 153-217 (VSEDGEEEEE…RRGSAAAKEE (65 aa)) is disordered. The segment covering 155 to 176 (EDGEEEEEAEVAEVMPEPEAEG) has biased composition (acidic residues). A compositionally biased stretch (low complexity) spans 177–192 (AGEPSAEGAGQAAAEA). Positions 206–217 (GERRGSAAAKEE) are enriched in basic and acidic residues.

Belongs to the polypeptide deformylase family. The cofactor is Fe(2+).

It carries out the reaction N-terminal N-formyl-L-methionyl-[peptide] + H2O = N-terminal L-methionyl-[peptide] + formate. Functionally, removes the formyl group from the N-terminal Met of newly synthesized proteins. Requires at least a dipeptide for an efficient rate of reaction. N-terminal L-methionine is a prerequisite for activity but the enzyme has broad specificity at other positions. This Symbiobacterium thermophilum (strain DSM 24528 / JCM 14929 / IAM 14863 / T) protein is Peptide deformylase.